The following is a 418-amino-acid chain: Gamma-glutamyl phosphate reductase (418 aa).

It belongs to the gamma-glutamyl phosphate reductase family.

The protein localises to the cytoplasm. It catalyses the reaction L-glutamate 5-semialdehyde + phosphate + NADP(+) = L-glutamyl 5-phosphate + NADPH + H(+). It functions in the pathway amino-acid biosynthesis; L-proline biosynthesis; L-glutamate 5-semialdehyde from L-glutamate: step 2/2. Catalyzes the NADPH-dependent reduction of L-glutamate 5-phosphate into L-glutamate 5-semialdehyde and phosphate. The product spontaneously undergoes cyclization to form 1-pyrroline-5-carboxylate. This Histophilus somni (strain 2336) (Haemophilus somnus) protein is Gamma-glutamyl phosphate reductase.